The primary structure comprises 151 residues: uncharacterized protein (151 aa).

Helical transmembrane passes span G8–E28, W60–T80, F82–S102, and L113–S133.

Belongs to the DoxX family.

It is found in the cell membrane. This is an uncharacterized protein from Haemophilus influenzae (strain ATCC 51907 / DSM 11121 / KW20 / Rd).